Consider the following 223-residue polypeptide: MEKRELVNIIDYTLLHPTANKADIESFLQEVVNYGFKTIFVQPYFVPFAVNWLADHDVNVGVPVGFSLGGATTHVKVEETKEAIRNGAKEIDMLVNLGALKSGDYQMVETDIAKVVEAANGLNTKVIIETALLNQEEKISVTECIIRAGADFVKTATGFNGGGATVEDVRLLNEIGKGKIQVKAAGGIKTYEDALAIIDAGATRIGSSGAIQIIRGETSTSSY.

The active-site Proton donor/acceptor is aspartate 92. Lysine 154 functions as the Schiff-base intermediate with acetaldehyde in the catalytic mechanism. The Proton donor/acceptor role is filled by lysine 183.

The protein belongs to the DeoC/FbaB aldolase family. DeoC type 1 subfamily.

It is found in the cytoplasm. The catalysed reaction is 2-deoxy-D-ribose 5-phosphate = D-glyceraldehyde 3-phosphate + acetaldehyde. The protein operates within carbohydrate degradation; 2-deoxy-D-ribose 1-phosphate degradation; D-glyceraldehyde 3-phosphate and acetaldehyde from 2-deoxy-alpha-D-ribose 1-phosphate: step 2/2. Catalyzes a reversible aldol reaction between acetaldehyde and D-glyceraldehyde 3-phosphate to generate 2-deoxy-D-ribose 5-phosphate. The sequence is that of Deoxyribose-phosphate aldolase 2 from Oceanobacillus iheyensis (strain DSM 14371 / CIP 107618 / JCM 11309 / KCTC 3954 / HTE831).